A 503-amino-acid chain; its full sequence is Arabinose import ATP-binding protein AraG (503 aa).

ABC transporter domains follow at residues Leu5–Arg240 and Leu253–Gly497. Gly37–Ser44 contributes to the ATP binding site.

This sequence belongs to the ABC transporter superfamily. Arabinose importer (TC 3.A.1.2.2) family. In terms of assembly, the complex is composed of two ATP-binding proteins (AraG), two transmembrane proteins (AraH) and a solute-binding protein (AraF).

It is found in the cell inner membrane. The enzyme catalyses L-arabinose(out) + ATP + H2O = L-arabinose(in) + ADP + phosphate + H(+). In terms of biological role, part of the ABC transporter complex AraFGH involved in arabinose import. Responsible for energy coupling to the transport system. The chain is Arabinose import ATP-binding protein AraG from Burkholderia pseudomallei (strain K96243).